The following is a 421-amino-acid chain: O-glycosyltransferase braB (421 aa).

The disordered stretch occupies residues 1 to 26; it reads MVPSVMEGAPQLGITSTDTSSAGVPP. Polar residues predominate over residues 13-22; that stretch reads GITSTDTSSA.

The protein belongs to the afumC glycosyltransferase family.

It functions in the pathway secondary metabolite biosynthesis. Its function is as follows. O-glycosyltransferase; part of the gene cluster that mediates the biosynthesis of the brasilane terpene glycosides brasilane D and E. The biosynthesis starts with the activity of the terpene cyclase braA that converts farnesyl pyrophosphate into the sesquiterpene alcohol trichobrasilenol. Subsequently, trichobrasilenol is glycosylated by the O-glycosyltransferase braB putatively using UDP-GlcNAc as sugar donor to yield brasilane A. The latter then undergoes two rounds of oxidation performed by the cytochrome P450 monooxygenase braC. In the first round braC hydroxylates C-12 forming brasilane D, which serves as substrate in the second round to establish the epoxide at the bond between C-5 and C-10 and oxidize the alcohol at C-12 to an aldehyde leading to the final product brasilane E. BraB is also able to glycosylate geraniol, linalool, perillyl alcohol, 3,4-dichlorophenol and, to a lesser extend, benzyl alcohol. This Annulohypoxylon truncatum (Hypoxylon truncatum) protein is O-glycosyltransferase braB.